Reading from the N-terminus, the 396-residue chain is Subtelomeric hrmA-associated cluster protein AFUB_079040 (396 aa).

2 disordered regions span residues 1-32 (MANK…QQSL) and 347-396 (YPEN…ECGR). The span at 23–32 (SHASGSQQSL) shows a compositional bias: polar residues. The segment covering 367 to 380 (SKKKKDKKKKKSNK) has biased composition (basic residues).

In terms of biological role, part of the subtelomeric hrmA-associated cluster (HAC) containing genes that alter the hyphal surface (such as reduced total chitin or increased beta-glucan exposure) and perturb inter-hyphal interactions within the developing biofilms, resulting in a loss of vertically aligned polarized growing filaments. Consequently, this hypoxia-typic morphotype (called H-MORPH) with altered biofilm architecture leads to increased hypoxia fitness, increased host inflammation, rapid disease progression, and mortality in a murine model of invasive aspergillosis. The sequence is that of Subtelomeric hrmA-associated cluster protein AFUB_079040 from Aspergillus fumigatus (strain CBS 144.89 / FGSC A1163 / CEA10) (Neosartorya fumigata).